An 86-amino-acid chain; its full sequence is Small ribosomal subunit protein bS16 (86 aa).

It belongs to the bacterial ribosomal protein bS16 family.

The sequence is that of Small ribosomal subunit protein bS16 from Xanthomonas campestris pv. campestris (strain 8004).